A 72-amino-acid chain; its full sequence is Translation initiation factor IF-1 (72 aa).

One can recognise an S1-like domain in the interval 1 to 72 (MAKDDVIVVD…DKGRITHRYK (72 aa)).

It belongs to the IF-1 family. In terms of assembly, component of the 30S ribosomal translation pre-initiation complex which assembles on the 30S ribosome in the order IF-2 and IF-3, IF-1 and N-formylmethionyl-tRNA(fMet); mRNA recruitment can occur at any time during PIC assembly.

It localises to the cytoplasm. Its function is as follows. One of the essential components for the initiation of protein synthesis. Stabilizes the binding of IF-2 and IF-3 on the 30S subunit to which N-formylmethionyl-tRNA(fMet) subsequently binds. Helps modulate mRNA selection, yielding the 30S pre-initiation complex (PIC). Upon addition of the 50S ribosomal subunit IF-1, IF-2 and IF-3 are released leaving the mature 70S translation initiation complex. The chain is Translation initiation factor IF-1 from Aliarcobacter butzleri (strain RM4018) (Arcobacter butzleri).